A 426-amino-acid chain; its full sequence is Enolase (426 aa).

(2R)-2-phosphoglycerate is bound at residue glutamine 163. The Proton donor role is filled by glutamate 205. Positions 242, 286, and 313 each coordinate Mg(2+). (2R)-2-phosphoglycerate-binding residues include lysine 338, arginine 367, serine 368, and lysine 389. Lysine 338 functions as the Proton acceptor in the catalytic mechanism.

This sequence belongs to the enolase family. Requires Mg(2+) as cofactor.

It localises to the cytoplasm. Its subcellular location is the secreted. It is found in the cell surface. It catalyses the reaction (2R)-2-phosphoglycerate = phosphoenolpyruvate + H2O. Its pathway is carbohydrate degradation; glycolysis; pyruvate from D-glyceraldehyde 3-phosphate: step 4/5. Functionally, catalyzes the reversible conversion of 2-phosphoglycerate (2-PG) into phosphoenolpyruvate (PEP). It is essential for the degradation of carbohydrates via glycolysis. This Helicobacter pylori (strain ATCC 700392 / 26695) (Campylobacter pylori) protein is Enolase.